Consider the following 254-residue polypeptide: PAXIP1-associated glutamate-rich protein 1 (254 aa).

Disordered stretches follow at residues 1-111 (MSLA…PPSE) and 127-254 (LQAE…QRKY). Positions 45–62 (KAEDEGEGGREETEREGS) are enriched in basic and acidic residues. A compositionally biased stretch (acidic residues) spans 78–98 (EPAEEDSEDWCVPCSDEEVEL). A sufficient for interaction with NCOA1 region spans residues 116–160 (YELLAAHGTLELQAEILPRRPPTPEAQSEEERSDEEPEAKEEEEE). Thr138 carries the post-translational modification Phosphothreonine. Positions 142 to 159 (QSEEERSDEEPEAKEEEE) are enriched in acidic residues. Residues Ser143 and Ser148 each carry the phosphoserine modification. The sufficient for interaction with ESR1 stretch occupies residues 161–254 (KPHMPTEFDF…SSLFPRQRKY (94 aa)). The segment covering 195-223 (QKREARLDKVLSDMKRHKKLEEQILRTGR) has biased composition (basic and acidic residues). A Phosphoserine modification is found at Ser237.

Component of the KMT2 family MLL2/MLL3 complex (also named ASCOM complex), at least composed of the HMTs KMT2D and/or KMT2C, the common subunits ASH2L, RBBP5, WDR5 and DPY30, and the complex type-specific subunits PAXIP1/PTIP, PAGR1, NCOA6 and KDM6A; PAXIP1 is required for the association with the MLL2/MLL3 complex. Forms a constitutive complex with PAXIP1/PTIP independently of the MLL2/MLL3 complex. Interacts with NCOA1, ESR1, NR3C1, AR. As to expression, ubiquitously expressed.

The protein localises to the nucleus. Functionally, its association with the histone methyltransferase MLL2/MLL3 complex is suggesting a role in epigenetic transcriptional activation. However, in association with PAXIP1/PTIP is proposed to function at least in part independently of the MLL2/MLL3 complex. Proposed to be recruited by PAXIP1 to sites of DNA damage where the PAGR1:PAXIP1 complex is required for cell survival in response to DNA damage independently of the MLL2/MLL3 complex. However, its function in DNA damage has been questioned. During immunoglobulin class switching in activated B-cells is involved in transcription regulation of downstream switch regions at the immunoglobulin heavy-chain (Igh) locus independently of the MLL2/MLL3 complex. Involved in both estrogen receptor-regulated gene transcription and estrogen-stimulated G1/S cell-cycle transition. Acts as a transcriptional cofactor for nuclear hormone receptors. Inhibits the induction properties of several steroid receptors such as NR3C1, AR and PPARG; the mechanism of inhibition appears to be gene-dependent. This is PAXIP1-associated glutamate-rich protein 1 (PAGR1) from Homo sapiens (Human).